A 635-amino-acid chain; its full sequence is BTB/POZ domain and ankyrin repeat-containing protein NPR2 (635 aa).

The region spanning 97-191 (SDADVDVADG…LYTGKLRPAP (95 aa)) is the BTB domain. A compositionally biased stretch (gly residues) spans 138-152 (AAGGGGGGGGGGGER). The disordered stretch occupies residues 138–157 (AAGGGGGGGGGGGERTGGRP). The C2HC NPR-type zinc-finger motif lies at 194 to 208 (VVSCADPMCPHDSCP). 4 residues coordinate Zn(2+): cysteine 197, cysteine 202, histidine 204, and cysteine 207. ANK repeat units follow at residues 317–347 (KRVR…TLDD), 349–376 (NALH…NLNL), and 380–409 (RGYT…AVSQ). The interval 439–576 (ESNKDRLCID…FLEDDLPDSP (138 aa)) is salicylic acid-binding core (SBC). A salicylate-binding site is contributed by arginine 484.

It belongs to the plant 'ANKYRIN-BTB/POZ' family. 'NPR1-like' subfamily. Interacts with NRR. Interacts with TGAL1 and TGAL11.

The protein resides in the nucleus. Its pathway is protein modification; protein ubiquitination. Functionally, salicylic acid (SA)-binding substrate-specific adapter of an E3 ubiquitin-protein ligase complex (CUL3-RBX1-BTB) which mediates the ubiquitination and subsequent proteasomal degradation of target proteins. May be involved in regulating basal defense responses against pathogens, and may be involved in crosstalk between SA- and JA-dependent signaling pathways. Does not seem to be involved in defense response against the bacterial blight disease caused by Xanthomonas oryzae pv. oryzae (Xoo). Over-expression of NPR2/NH2 does not confer disease resistance to Xoo. The chain is BTB/POZ domain and ankyrin repeat-containing protein NPR2 from Oryza sativa subsp. japonica (Rice).